The following is a 388-amino-acid chain: GDP-4-keto-6-deoxy-D-mannose 3-dehydratase (388 aa).

26–29 (KMFT) is a GDP-4-dehydro-alpha-D-rhamnose binding site. The helical transmembrane segment at 49-69 (YAVMVSSGSTANLLMIAALFF) threads the bilayer. Pyridoxal 5'-phosphate-binding positions include 56–57 (GS), W88, E162, and S183. Residue H188 is the Proton donor/acceptor of the active site. An L-glutamate-binding site is contributed by H215. R219 serves as a coordination point for GDP-4-dehydro-alpha-D-rhamnose. N248 contributes to the pyridoxal 5'-phosphate binding site. Residue R250 participates in L-glutamate binding. Residue E329 participates in GDP-4-dehydro-alpha-D-rhamnose binding.

It belongs to the DegT/DnrJ/EryC1 family. Homodimer. Requires pyridoxal 5'-phosphate as cofactor.

It is found in the cell membrane. It catalyses the reaction GDP-4-dehydro-alpha-D-rhamnose + L-glutamate = GDP-4-dehydro-3,6-dideoxy-alpha-D-mannose + 2-oxoglutarate + NH4(+). Its pathway is nucleotide-sugar metabolism; GDP-L-colitose biosynthesis. In terms of biological role, involved in the biosynthesis of L-colitose, a 3,6-dideoxyhexose present in the O-antigen region of lipopolysaccharides (LPS), where it serves as an antigenic determinant and is vital for bacterial defense and survival. Catalyzes the removal of the C3'-hydroxyl group from GDP-4-keto-6-deoxy-D-mannose via a combined transamination-deoxygenation reaction. The catalysis is initiated by a transamination step in which pyridoxal 5'-phosphate (PLP) is converted to pyridoxamine 5'-phosphate (PMP) in the presence of L-glutamate. This coenzyme then forms a Schiff base with GDP-4-keto-6-deoxy-D-mannose and the resulting adduct undergoes a PMP-mediated beta-dehydration reaction to give a sugar enamine intermediate, which after tautomerization and hydrolysis to release ammonia yields GDP-4-keto-3,6-dideoxy-D-mannose as a product. In vitro, is able to catalyze the formation of GDP-4-keto-3,6-dideoxymannose using GDP-perosamine rather than GDP-4-keto-6-deoxymannose as a substrate, with no need of glutamate. In Escherichia coli O55:H7 (strain CB9615 / EPEC), this protein is GDP-4-keto-6-deoxy-D-mannose 3-dehydratase.